The primary structure comprises 585 residues: Parathyroid hormone/parathyroid hormone-related peptide receptor (585 aa).

The N-terminal stretch at 1 to 26 is a signal peptide; that stretch reads MGAPRISHSLALLLCCSVLSSVYALV. Residues 27 to 185 are Extracellular-facing; the sequence is DADDVITKEE…REREVFDRLG (159 aa). Disulfide bonds link C48–C114, C105–C145, and C128–C167. The interval 69-90 is disordered; sequence MSRSAKTKKEKPAEKLYSQAEE. N148, N158, N163, and N173 each carry an N-linked (GlcNAc...) asparagine glycan. A helical membrane pass occupies residues 186 to 209; sequence MIYTVGYSISLGSLTVAVLILGYF. At 210-216 the chain is on the cytoplasmic side; the sequence is RRLHCTR. Residues 217-236 traverse the membrane as a helical segment; it reads NYIHMHLFVSFMLRAVSIFI. Topologically, residues 237-276 are extracellular; it reads KDAVLYSGVSTDEIERITEEELRAFTEPPPADKAGFVGCR. Residues 277-300 traverse the membrane as a helical segment; it reads VAVTVFLYFLTTNYYWILVEGLYL. Residues 301-314 are Cytoplasmic-facing; it reads HSLIFMAFFSEKKY. Residues 315 to 336 traverse the membrane as a helical segment; it reads LWGFTLFGWGLPAVFVAVWVTV. Residues 337–355 lie on the Extracellular side of the membrane; that stretch reads RATLANTECWDLSSGNKKW. The chain crosses the membrane as a helical span at residues 356–376; sequence IIQVPILAAIVVNFILFINII. Topologically, residues 377-403 are cytoplasmic; it reads RVLATKLRETNAGRCDTRQQYRKLLKS. A helical membrane pass occupies residues 404-422; it reads TLVLMPLFGVHYIVFMATP. The Extracellular portion of the chain corresponds to 423 to 434; the sequence is YTEVSGILWQVQ. The helical transmembrane segment at 435 to 457 threads the bilayer; it reads MHYEMLFNSFQGFFVAIIYCFCN. Residues 458–585 are Cytoplasmic-facing; sequence GEVQAEIKKS…LLEEERETVM (128 aa). An Important for interaction with G proteins motif is present at residues 468-471; sequence WSRW. Positions 531-585 are disordered; that stretch reads PGYVKHGSISENSLPSSGPEPGTKDDGYLNGSGLYEPMVGEQPPPLLEEERETVM.

This sequence belongs to the G-protein coupled receptor 2 family. Homodimer in the absence of bound ligand. Peptide hormone binding leads to dissociation of the homodimer. Post-translationally, N-glycosylated.

The protein localises to the cell membrane. In terms of biological role, G-protein-coupled receptor for parathyroid hormone (PTH) and for parathyroid hormone-related peptide (PTHLH). Ligand binding causes a conformation change that triggers signaling via guanine nucleotide-binding proteins (G proteins) and modulates the activity of downstream effectors, such as adenylate cyclase (cAMP). PTH1R is coupled to G(s) G alpha proteins and mediates activation of adenylate cyclase activity. PTHLH dissociates from PTH1R more rapidly than PTH; as consequence, the cAMP response induced by PTHLH decays faster than the response induced by PTH. The polypeptide is Parathyroid hormone/parathyroid hormone-related peptide receptor (PTH1R) (Didelphis virginiana (North American opossum)).